We begin with the raw amino-acid sequence, 330 residues long: Dipeptide transport ATP-binding protein DppD (330 aa).

Residues 6–254 form the ABC transporter domain; that stretch reads VKELSVHFGD…PKHPYTQALL (249 aa). Residue 40-47 coordinates ATP; the sequence is GESGSGKS.

This sequence belongs to the ABC transporter superfamily.

The protein localises to the cell inner membrane. It carries out the reaction a dipeptide(out) + ATP + H2O = a dipeptide(in) + ADP + phosphate + H(+). Part of the ABC transporter DppBCDF involved in dipeptide transport. Responsible for energy coupling to the transport system. The sequence is that of Dipeptide transport ATP-binding protein DppD (dppD) from Haemophilus influenzae (strain ATCC 51907 / DSM 11121 / KW20 / Rd).